We begin with the raw amino-acid sequence, 2014 residues long: Leucine-rich repeat serine/threonine-protein kinase 1 (2014 aa).

ANK repeat units lie at residues Gln51 to Ser81, Glu86 to Thr116, Thr119 to Thr148, Leu152 to Asn182, and Ile193 to Ser222. LRR repeat units lie at residues Gln279–Gly300, Asn303–Asp324, Arg330–Leu351, Lys353–Thr374, Lys381–Ser402, Ser405–Pro426, Leu427–Phe447, His451–Leu472, Ala474–Thr495, Gln498–Lys519, Ser549–Leu570, Asn572–Leu594, and Asn596–Glu617. The region spanning Lys632–Met826 is the Roc domain. The GDP site is built by Pro647, Arg648, Gly650, Lys651, Ser652, Thr653, Glu670, His758, Asp760, Cys806, and Lys807. The COR domain maps to Gly840–Lys1237. Phosphothreonine is present on Thr1061. Residues Ser1064 and Ser1074 each carry the phosphoserine modification. Thr1075 is subject to Phosphothreonine. In terms of domain architecture, Protein kinase spans Glu1242–Phe1525. ATP-binding positions include Leu1248 to Val1256 and Lys1270. Asp1386 functions as the Proton acceptor in the catalytic mechanism. 7 WD repeats span residues Ala1539–Cys1579, Met1582–Asp1622, Thr1623–Tyr1668, Val1693–Pro1729, Tyr1730–Gly1778, Asp1779–Lys1948, and Arg1950–Arg1986. Residues Pro1791–Leu1906 are WD40 loop; involved in dimer stabilization. The tract at residues Ser1839–Ser1895 is disordered. Residues Arg1853 to Ser1871 show a composition bias toward low complexity.

The protein belongs to the protein kinase superfamily. TKL Ser/Thr protein kinase family. ROCO subfamily. As to quaternary structure, homodimer. The homodimer is autoinhibited and stabilized by its N-terminal residues and ANK repeats. Interacts with CSK. Mg(2+) serves as cofactor. Mn(2+) is required as a cofactor. In terms of processing, autophosphorylated. Autophosphorylation in inhibited in its dimeric state. Phosphorylated by protein kinase C isozymes PRKCA, PRKCB, PRKCG, PRKCE, PRKCZ and PRKCT at Ser-1064, Ser-1074 and Thr-1075. Phosphorylation at these residues activates the kinase activity of LRRK1 to phosphorylate RAB7A. In terms of tissue distribution, expressed in osteoclasts and bone marrow stromal cells.

The protein resides in the cytoplasm. The protein localises to the cell membrane. It catalyses the reaction L-seryl-[protein] + ATP = O-phospho-L-seryl-[protein] + ADP + H(+). The enzyme catalyses L-threonyl-[protein] + ATP = O-phospho-L-threonyl-[protein] + ADP + H(+). Activated by phosphorylation by PKC. Binds both GTP and GDP; binding of GTP stimulates kinase activity. Sterically autoinhibited in its dimeric state. Its function is as follows. Serine/threonine-protein kinase which phosphorylates RAB proteins involved in intracellular trafficking. Phosphorylates RAB7A; this activity is dependent on protein kinase C (PKC) activation. Plays a role in the negative regulation of bone mass, acting through the maturation of osteoclasts. In Mus musculus (Mouse), this protein is Leucine-rich repeat serine/threonine-protein kinase 1.